The sequence spans 229 residues: Coiled-coil domain-containing protein 134 (229 aa).

Residues 1 to 22 (MDLLQSLAVFFVLLLPGTEVTG) form the signal peptide. Asn-148 carries an N-linked (GlcNAc...) asparagine glycan. The segment at 191 to 229 (PSTDPFQKALREEEKRRKKEEKRKEIRKGPRISRSQSEL) is disordered. The stretch at 196–218 (FQKALREEEKRRKKEEKRKEIRK) forms a coiled coil. Positions 226–229 (QSEL) match the Prevents secretion from ER motif.

It belongs to the CCDC134 family. Interacts with TADA2A. Associates with the PCAF complex via TADA2A binding. O-glycosylated, with additional sialic acid modifications.

It localises to the endoplasmic reticulum lumen. It is found in the secreted. The protein localises to the cytoplasm. Its subcellular location is the nucleus. Its function is as follows. Molecular adapter required to prevent protein hyperglycosylation of HSP90B1: during translation, associates with nascent HSP90B1 and the STT3A catalytic component of the OST-A complex and tethers them to a specialized translocon that forms a microenvironment for HSP90B1 folding. In the CCDC134-containing translocon, STT3A associates with the SRT pseudosubstrate motif of HSP90B1, preventing access to facultative glycosylation sites until folding is completed, preventing hyperglycosylation and subsequent degradation of HSP90B1. In extracellular secreted form, promotes proliferation and activation of CD8(+) T-cells, suggesting a cytokine-like function. May inhibit ERK and JNK signaling activity. May suppress cell migration and invasion activity, via its effects on ERK and JNK signaling. May also localize in the nucleus: enhances stability of the PCAF histone acetyltransferase (HAT) complex member TADA2A and thus promotes PCAF-mediated histone acetyltransferase activity. Has a critical role in the regulation of osteogenesis and bone development. The polypeptide is Coiled-coil domain-containing protein 134 (Ccdc134) (Rattus norvegicus (Rat)).